The sequence spans 378 residues: Chaperone protein DnaJ (378 aa).

Residues 5-69 (EYYDRLGVSK…QKRAAYDQYG (65 aa)) form the J domain. The segment at 134–216 (GVEKEVSYNR…CHGTGHEKQA (83 aa)) adopts a CR-type zinc-finger fold. Zn(2+) contacts are provided by Cys-147, Cys-150, Cys-164, Cys-167, Cys-190, Cys-193, Cys-204, and Cys-207. 4 CXXCXGXG motif repeats span residues 147 to 154 (CGTCLGSG), 164 to 171 (CRKCHGSG), 190 to 197 (CDICHGSG), and 204 to 211 (CQTCHGTG).

It belongs to the DnaJ family. As to quaternary structure, homodimer. Requires Zn(2+) as cofactor.

The protein resides in the cytoplasm. Its function is as follows. Participates actively in the response to hyperosmotic and heat shock by preventing the aggregation of stress-denatured proteins and by disaggregating proteins, also in an autonomous, DnaK-independent fashion. Unfolded proteins bind initially to DnaJ; upon interaction with the DnaJ-bound protein, DnaK hydrolyzes its bound ATP, resulting in the formation of a stable complex. GrpE releases ADP from DnaK; ATP binding to DnaK triggers the release of the substrate protein, thus completing the reaction cycle. Several rounds of ATP-dependent interactions between DnaJ, DnaK and GrpE are required for fully efficient folding. Also involved, together with DnaK and GrpE, in the DNA replication of plasmids through activation of initiation proteins. The sequence is that of Chaperone protein DnaJ from Streptococcus pyogenes serotype M6 (strain ATCC BAA-946 / MGAS10394).